Consider the following 48-residue polypeptide: Sperm protamine P1 (48 aa).

It belongs to the protamine P1 family. In terms of tissue distribution, testis.

It localises to the nucleus. Its subcellular location is the chromosome. In terms of biological role, protamines substitute for histones in the chromatin of sperm during the haploid phase of spermatogenesis. They compact sperm DNA into a highly condensed, stable and inactive complex. This Corynorhinus townsendii (Townsend's big-eared bat) protein is Sperm protamine P1 (PRM1).